The chain runs to 545 residues: Esterase-5C (545 aa).

A signal peptide spans 1 to 19; it reads MLAARLIILLSFYWLSASA. Cysteines 84 and 103 form a disulfide. A glycan (N-linked (GlcNAc...) asparagine) is linked at asparagine 113. Serine 207 acts as the Acyl-ester intermediate in catalysis. Cysteine 259 and cysteine 271 are disulfide-bonded. Residue asparagine 421 is glycosylated (N-linked (GlcNAc...) asparagine). The active-site Charge relay system is histidine 467. A glycan (N-linked (GlcNAc...) asparagine) is linked at asparagine 507. A disulfide bond links cysteine 515 and cysteine 536.

It belongs to the type-B carboxylesterase/lipase family.

It is found in the secreted. It carries out the reaction a carboxylic ester + H2O = an alcohol + a carboxylate + H(+). The chain is Esterase-5C (Est-5C) from Drosophila miranda (Fruit fly).